The sequence spans 217 residues: UPF0502 protein ASA_1460 (217 aa).

This sequence belongs to the UPF0502 family.

This chain is UPF0502 protein ASA_1460, found in Aeromonas salmonicida (strain A449).